A 326-amino-acid polypeptide reads, in one-letter code: UDP-3-O-acylglucosamine N-acyltransferase (326 aa).

The active-site Proton acceptor is the His235.

It belongs to the transferase hexapeptide repeat family. LpxD subfamily. As to quaternary structure, homotrimer.

The enzyme catalyses a UDP-3-O-[(3R)-3-hydroxyacyl]-alpha-D-glucosamine + a (3R)-hydroxyacyl-[ACP] = a UDP-2-N,3-O-bis[(3R)-3-hydroxyacyl]-alpha-D-glucosamine + holo-[ACP] + H(+). It functions in the pathway bacterial outer membrane biogenesis; LPS lipid A biosynthesis. Its function is as follows. Catalyzes the N-acylation of UDP-3-O-acylglucosamine using 3-hydroxyacyl-ACP as the acyl donor. Is involved in the biosynthesis of lipid A, a phosphorylated glycolipid that anchors the lipopolysaccharide to the outer membrane of the cell. The protein is UDP-3-O-acylglucosamine N-acyltransferase of Helicobacter hepaticus (strain ATCC 51449 / 3B1).